We begin with the raw amino-acid sequence, 437 residues long: Nickel-cobalt-cadmium resistance protein NccC (437 aa).

The signal sequence occupies residues 1 to 48 (MGAVLKAEANIFRSHPFRPMNQATPKKLRSAPCIGVALLLMATGSIQA).

This sequence belongs to the outer membrane factor (OMF) (TC 1.B.17) family.

Component of the NCC cation-efflux system that confers resistance to nickel, cobalt and cadmium. In Alcaligenes xylosoxydans xylosoxydans (Achromobacter xylosoxidans), this protein is Nickel-cobalt-cadmium resistance protein NccC (nccC).